The sequence spans 310 residues: Iron ABC transporter substrate-binding lipoprotein MtsA (310 aa).

The signal sequence occupies residues 1-20 (MGKKMSLILGAFLSVFLLVA). C21 is lipidated: N-palmitoyl cysteine. C21 carries the S-diacylglycerol cysteine lipid modification. Fe(2+) contacts are provided by H68, H140, E206, and D281.

The protein belongs to the bacterial solute-binding protein 9 family. Lipoprotein receptor antigen (Lrai) subfamily.

The protein resides in the cell membrane. In terms of biological role, part of the ATP-binding cassette (ABC) transport system MtsABC involved in iron import. Binds iron with high affinity and specificity and delivers it to the membrane permease for translocation into the cytoplasm. Has low affinity for Zn(2+) and Cu(2+). This chain is Iron ABC transporter substrate-binding lipoprotein MtsA (mtsA), found in Streptococcus pyogenes serotype M6 (strain ATCC BAA-946 / MGAS10394).